A 207-amino-acid chain; its full sequence is Large ribosomal subunit protein uL4 (207 aa).

Residues 56 to 75 are disordered; the sequence is EVSGTTKKPFKQKGTGNARQ.

The protein belongs to the universal ribosomal protein uL4 family. Part of the 50S ribosomal subunit.

Its function is as follows. One of the primary rRNA binding proteins, this protein initially binds near the 5'-end of the 23S rRNA. It is important during the early stages of 50S assembly. It makes multiple contacts with different domains of the 23S rRNA in the assembled 50S subunit and ribosome. Functionally, forms part of the polypeptide exit tunnel. The sequence is that of Large ribosomal subunit protein uL4 from Rickettsia prowazekii (strain Madrid E).